A 398-amino-acid chain; its full sequence is Acetate kinase (398 aa).

Residue N8 coordinates Mg(2+). K15 is a binding site for ATP. R89 is a binding site for substrate. D146 acts as the Proton donor/acceptor in catalysis. ATP is bound by residues 206-210 (HIGNG), 283-285 (DMR), and 331-335 (GMGEN). Residue E383 coordinates Mg(2+).

Belongs to the acetokinase family. In terms of assembly, homodimer. The cofactor is Mg(2+). Mn(2+) is required as a cofactor.

It is found in the cytoplasm. The catalysed reaction is acetate + ATP = acetyl phosphate + ADP. The protein operates within metabolic intermediate biosynthesis; acetyl-CoA biosynthesis; acetyl-CoA from acetate: step 1/2. In terms of biological role, catalyzes the formation of acetyl phosphate from acetate and ATP. Can also catalyze the reverse reaction. The chain is Acetate kinase from Streptococcus pyogenes serotype M6 (strain ATCC BAA-946 / MGAS10394).